The chain runs to 757 residues: Primary amine oxidase (757 aa).

The signal sequence occupies residues 1-30 (MGSPSLYSARKTTLALAVALSFAWQAPVFA). Substrate-binding positions include 411–422 (YLDSGDYGMGTL) and 493–498 (VGNYDY). Asp-413 functions as the Proton acceptor in the catalytic mechanism. Tyr-496 (schiff-base intermediate with substrate; via topaquinone) is an active-site residue. Residue Tyr-496 is modified to 2',4',5'-topaquinone. Residues His-554 and His-556 each coordinate Cu cation. Ca(2+) is bound by residues Asp-563, Leu-564, Asp-565, Glu-603, Tyr-697, Asp-700, Glu-702, Asp-708, and Ala-709. Mn(2+) is bound at residue Asp-563. Asp-565 provides a ligand contact to Mn(2+). Residues 680–701 (PEGKYPNRSTHDTGLGQYSKDN) form a disordered region. A Mn(2+)-binding site is contributed by Asp-708. Residue His-719 coordinates Cu cation.

It belongs to the copper/topaquinone oxidase family. In terms of assembly, homodimer. Requires Cu cation as cofactor. The cofactor is Zn(2+). Ca(2+) serves as cofactor. L-topaquinone is required as a cofactor. It depends on Mn(2+) as a cofactor. In terms of processing, topaquinone (TPQ) is generated by copper-dependent autoxidation of a specific tyrosyl residue.

It is found in the periplasm. It carries out the reaction a primary methyl amine + O2 + H2O = an aldehyde + H2O2 + NH4(+). The catalysed reaction is 2-phenylethylamine + O2 + H2O = 2-phenylacetaldehyde + H2O2 + NH4(+). The protein operates within amino-acid degradation; L-phenylalanine degradation; phenylacetate from L-phenylalanine: step 2/3. Inhibited by 2-hydrazinopyridine. Its function is as follows. The enzyme prefers aromatic over aliphatic amines. The sequence is that of Primary amine oxidase (tynA) from Escherichia coli (strain K12).